The chain runs to 279 residues: Oxygen-dependent coproporphyrinogen-III oxidase (279 aa).

Residue serine 102 participates in substrate binding. Residues histidine 106 and histidine 116 each contribute to the a divalent metal cation site. Residue histidine 116 is the Proton donor of the active site. Substrate is bound at residue 118-120; sequence NTR. 2 residues coordinate a divalent metal cation: histidine 149 and histidine 179. The interval 244-279 is important for dimerization; sequence YVEFNLLYDRGTKFGLMTDGNVEAILMSLPPEVKFN.

Belongs to the aerobic coproporphyrinogen-III oxidase family. In terms of assembly, homodimer. It depends on a divalent metal cation as a cofactor.

It localises to the cytoplasm. The catalysed reaction is coproporphyrinogen III + O2 + 2 H(+) = protoporphyrinogen IX + 2 CO2 + 2 H2O. Its pathway is porphyrin-containing compound metabolism; protoporphyrin-IX biosynthesis; protoporphyrinogen-IX from coproporphyrinogen-III (O2 route): step 1/1. In terms of biological role, involved in the heme biosynthesis. Catalyzes the aerobic oxidative decarboxylation of propionate groups of rings A and B of coproporphyrinogen-III to yield the vinyl groups in protoporphyrinogen-IX. The chain is Oxygen-dependent coproporphyrinogen-III oxidase from Rickettsia felis (strain ATCC VR-1525 / URRWXCal2) (Rickettsia azadi).